A 423-amino-acid polypeptide reads, in one-letter code: Enolase (423 aa).

Gln163 contacts (2R)-2-phosphoglycerate. Glu205 acts as the Proton donor in catalysis. Residues Asp242, Glu285, and Asp312 each contribute to the Mg(2+) site. (2R)-2-phosphoglycerate contacts are provided by Lys337, Arg366, Ser367, and Lys388. Lys337 serves as the catalytic Proton acceptor.

Belongs to the enolase family. The cofactor is Mg(2+).

The protein resides in the cytoplasm. It localises to the secreted. It is found in the cell surface. The catalysed reaction is (2R)-2-phosphoglycerate = phosphoenolpyruvate + H2O. It functions in the pathway carbohydrate degradation; glycolysis; pyruvate from D-glyceraldehyde 3-phosphate: step 4/5. Functionally, catalyzes the reversible conversion of 2-phosphoglycerate (2-PG) into phosphoenolpyruvate (PEP). It is essential for the degradation of carbohydrates via glycolysis. This is Enolase from Desulforapulum autotrophicum (strain ATCC 43914 / DSM 3382 / VKM B-1955 / HRM2) (Desulfobacterium autotrophicum).